The following is a 539-amino-acid chain: Glucose-6-phosphate isomerase (539 aa).

Glu-349 functions as the Proton donor in the catalytic mechanism. Residues His-380 and Lys-508 contribute to the active site.

It belongs to the GPI family.

The protein resides in the cytoplasm. It carries out the reaction alpha-D-glucose 6-phosphate = beta-D-fructose 6-phosphate. Its pathway is carbohydrate biosynthesis; gluconeogenesis. The protein operates within carbohydrate degradation; glycolysis; D-glyceraldehyde 3-phosphate and glycerone phosphate from D-glucose: step 2/4. Its function is as follows. Catalyzes the reversible isomerization of glucose-6-phosphate to fructose-6-phosphate. This chain is Glucose-6-phosphate isomerase, found in Caulobacter sp. (strain K31).